A 435-amino-acid polypeptide reads, in one-letter code: MEIRCKVLVCHIILLHSATVYLYSVPASQQNPESVVVSVTNISTHVGDQGFLTCESYRMVWTQDNLMDRQRVVHWDLYNSQGVYRGERLLDMFSAGEQRIYKDYNQRRISVSESAFQDGNFSLVIKDVSMIDQGLYSCNLHHHYCHLDETVRVQLNITKSERKVKIYWDGEKIVIVALVHSTVLLPCENHDHMWTDRHREEDQQVVHWDRQAPGIPHDRADRLIDMYASGERRAYGSLFLRRKMNVSNSAFSQGDFTLFIPYLTRGDEGTYSCHLHHHYCGLHERRIFYLSVSDRPKTEEPSKTNSDSAPAIDSNVVQENKVINVTIQESRLHFFQQLGYILATLLLFILLLTAVILITRKHQKRGYAYNLNKPQGKEVNMQEICLRPPDLIQYKKEELRIDYKNNILKERAEMDRVFAPKNIDLDLELRKEYCK.

A signal peptide spans 1–22; sequence MEIRCKVLVCHIILLHSATVYL. Residues 23 to 337 lie on the Extracellular side of the membrane; that stretch reads YSVPASQQNP…QESRLHFFQQ (315 aa). Ig-like V-type domains follow at residues 32–158 and 156–293; these read PESV…LNIT and NITK…LSVS. Residues asparagine 41, asparagine 120, asparagine 156, asparagine 245, and asparagine 324 are each glycosylated (N-linked (GlcNAc...) asparagine). Cysteine 54 and cysteine 138 are joined by a disulfide. Cysteine 187 and cysteine 273 are oxidised to a cystine. Residues 338-358 form a helical membrane-spanning segment; it reads LGYILATLLLFILLLTAVILI. Residues 359-435 are Cytoplasmic-facing; it reads TRKHQKRGYA…DLELRKEYCK (77 aa).

Homodimer in cis. Does not appear to form trans-homodimers.

The protein localises to the cell membrane. Transmembrane protein which can modulate activity of various signaling pathways, probably via binding to integrin ITGAV:ITGB3. Mediates heterophilic cell-cell interactions in vitro. This Xenopus laevis (African clawed frog) protein is Matrix remodeling-associated protein 8 (mxra8).